Here is a 416-residue protein sequence, read N- to C-terminus: E3 ubiquitin-protein ligase DMA1 (416 aa).

The tract at residues 1-30 (MSTNTVPSSPPNQTPPAASGIATSHDHTKF) is disordered. Glycyl lysine isopeptide (Lys-Gly) (interchain with G-Cter in ubiquitin) cross-links involve residues Lys150, Lys204, Lys217, Lys237, Lys240, Lys260, Lys300, Lys306, Lys313, and Lys317. Residues 189–252 (IIIGRYTERV…SGTFLNHQRL (64 aa)) form the FHA domain. The segment at 327–371 (CSICLNKIKPCQAIFISPCAHSWHFHCVRRLVIMNYPQFMCPNCR) adopts an RING-type zinc-finger fold.

Belongs to the DMA1 family. In terms of assembly, interacts with CDC123. Interacts with PCL1. UBC4-dependent autoubiquitination occurs at Lys-150, Lys-204, Lys-217, Lys-237, Lys-240, Lys-260, Lys-300, Lys-306, Lys-313 and Lys-317. UBC4-dependent autoubiquitination is responsible for DMA2 turnover. UBC13/MMS2-dependent autoubiquitination occurs at Lys-237 and Lys-306. Lys-204 and Lys-306 are also ubiquitinated in trans by DMA2 E3 ligase in association with UBC4.

It is found in the cytoplasm. It carries out the reaction S-ubiquitinyl-[E2 ubiquitin-conjugating enzyme]-L-cysteine + [acceptor protein]-L-lysine = [E2 ubiquitin-conjugating enzyme]-L-cysteine + N(6)-ubiquitinyl-[acceptor protein]-L-lysine.. E3 ubiquitin-protein ligase which functions in cell cycle retarding in conjunction with the UBC4 and UBC13/MMS2 complex, 2 E2 ubiquitin conjugating enzymes. Involved in nutritional control of the cell cycle. Targets the G1 cyclin PCL1 for destruction. Required for proper spindle positioning, likely regulating septin ring deposition at the bud neck. The protein is E3 ubiquitin-protein ligase DMA1 of Saccharomyces cerevisiae (strain ATCC 204508 / S288c) (Baker's yeast).